The sequence spans 484 residues: Glycogen synthase 2 (484 aa).

An ADP-alpha-D-glucose-binding site is contributed by arginine 15.

This sequence belongs to the glycosyltransferase 1 family. Bacterial/plant glycogen synthase subfamily.

The enzyme catalyses [(1-&gt;4)-alpha-D-glucosyl](n) + ADP-alpha-D-glucose = [(1-&gt;4)-alpha-D-glucosyl](n+1) + ADP + H(+). It participates in glycan biosynthesis; glycogen biosynthesis. Its function is as follows. Synthesizes alpha-1,4-glucan chains using ADP-glucose. This is Glycogen synthase 2 from Geobacter sulfurreducens (strain ATCC 51573 / DSM 12127 / PCA).